The primary structure comprises 893 residues: Probable disease resistance protein At1g62630 (893 aa).

Residues 24–68 (GSYTHNLEKNLVALETTMEELKAKRDDLLRRLKREEDRGLQRLSE) adopt a coiled-coil conformation. An NB-ARC domain is found at 136–440 (TEQASTSAFE…CEEIIDGSEG (305 aa)). 179-186 (GMGGVGKT) is a binding site for ATP. LRR repeat units follow at residues 516–537 (VVRR…YECM), 538–559 (ELTT…SEIK), 571–593 (KLAV…ISNL), 595–617 (SLKY…QELK), 618–640 (KIIH…SSLH), and 641–663 (NLKV…KELE).

Belongs to the disease resistance NB-LRR family.

In terms of biological role, probable disease resistance protein. This is Probable disease resistance protein At1g62630 from Arabidopsis thaliana (Mouse-ear cress).